The sequence spans 342 residues: MTIRIAINGFGRIGRNVVRALYESGRRAEITVVAINELADAAGIAHLLKYDTSHGRFAWDVRQEREQLFVGDDAIRLLHEPTIAALPWRELAVDVVLDCTGVYGSREHGEAHLQAGAKKVLFSHPGGNDLDATVVYGVNQDELRAEHRIVSNASCTTNCIIPIIKLLDDAYGIESGTVTTIHSAMHDQQVIDAYHPDLRRTRAASQSIIPVDTKLAAGITRIFPQFNDRFEAIAVRVPTINVTAIDLSVTVKKPVKACEVNQLLQKAAQGAFHGIVDYTELPLVSTDFNHDPHSAIVDGTQTRVSGAHLIKTLVWCDNEWGFANRMLDTTLAMAAIGFRFDA.

12 to 13 (RI) is an NAD(+) binding site. Substrate contacts are provided by residues 154 to 156 (SCT), Arg200, 213 to 214 (TK), and Arg236. Cys155 (nucleophile) is an active-site residue. Asn318 contributes to the NAD(+) binding site.

Belongs to the glyceraldehyde-3-phosphate dehydrogenase family. Epd subfamily. As to quaternary structure, homotetramer.

It is found in the cytoplasm. The enzyme catalyses D-erythrose 4-phosphate + NAD(+) + H2O = 4-phospho-D-erythronate + NADH + 2 H(+). The protein operates within cofactor biosynthesis; pyridoxine 5'-phosphate biosynthesis; pyridoxine 5'-phosphate from D-erythrose 4-phosphate: step 1/5. In terms of biological role, catalyzes the NAD-dependent conversion of D-erythrose 4-phosphate to 4-phosphoerythronate. In Klebsiella pneumoniae (strain 342), this protein is D-erythrose-4-phosphate dehydrogenase.